The sequence spans 235 residues: Histidine/lysine/arginine/ornithine transport system permease protein HisM (235 aa).

Residues 1 to 26 (MIEIIQEYWKSLLWTDGYRFTGVAIT) are Periplasmic-facing. Positions 23–221 (VAITLWLLIS…LISYVLISLF (199 aa)) constitute an ABC transmembrane type-1 domain. A helical transmembrane segment spans residues 27 to 47 (LWLLISSVVMGGLLAVILAVG). At 48-58 (RVSSNKFIRFP) the chain is on the cytoplasmic side. Residues 59–79 (IWLFTYIFRGTPLYVQLLVFY) form a helical membrane-spanning segment. The Periplasmic segment spans residues 80–104 (SGMYTLEIVKGTDLLNAFFRSGLNC). The helical transmembrane segment at 105 to 125 (TVLALTLNTCAYTTEIFAGAI) threads the bilayer. Over 126–157 (RSVPHGEIEAARAYGFSSFKMYRCIILPSALR) the chain is Cytoplasmic. The helical transmembrane segment at 158-178 (IALPAYSNEVILMLHSTALAF) threads the bilayer. The Periplasmic portion of the chain corresponds to 179-199 (TATVPDLLKIARDINSATYQP). The helical transmembrane segment at 200-220 (FTAFGIAAVLYLLISYVLISL) threads the bilayer. Topologically, residues 221-235 (FRRAERRWLQHVSSK) are cytoplasmic.

This sequence belongs to the binding-protein-dependent transport system permease family. HisMQ subfamily. In terms of assembly, the HisPMQJ complex is composed of two ATP-binding proteins (HisP), two transmembrane proteins (HisM and HisQ) and a solute-binding protein (HisJ). The HisPMQ-ArgT complex is composed of two ATP-binding proteins (HisP), two transmembrane proteins (HisM and HisQ) and a solute-binding protein (ArgT).

Its subcellular location is the cell inner membrane. Part of the ABC transporter complex HisPMQJ involved in histidine transport. Is also part of the ABC transporter complex HisPMQ-ArgT involved in lysine/arginine/ornithine transport. Probably responsible for the translocation of the substrate across the membrane. This chain is Histidine/lysine/arginine/ornithine transport system permease protein HisM (hisM), found in Salmonella typhi.